Reading from the N-terminus, the 455-residue chain is tRNA-2-methylthio-N(6)-dimethylallyladenosine synthase (455 aa).

Positions 10 to 130 constitute an MTTase N-terminal domain; sequence RKVFIKTYGC…LPDALKRVRR (121 aa). [4Fe-4S] cluster-binding residues include Cys-19, Cys-55, Cys-93, Cys-171, Cys-175, and Cys-178. Positions 157–389 constitute a Radical SAM core domain; sequence RSRGVTAFLT…QALLLRQQKE (233 aa). The TRAM domain maps to 392-454; it reads ESLVGKTMDV…PNSLFAEVAG (63 aa).

This sequence belongs to the methylthiotransferase family. MiaB subfamily. As to quaternary structure, monomer. [4Fe-4S] cluster serves as cofactor.

The protein resides in the cytoplasm. The enzyme catalyses N(6)-dimethylallyladenosine(37) in tRNA + (sulfur carrier)-SH + AH2 + 2 S-adenosyl-L-methionine = 2-methylsulfanyl-N(6)-dimethylallyladenosine(37) in tRNA + (sulfur carrier)-H + 5'-deoxyadenosine + L-methionine + A + S-adenosyl-L-homocysteine + 2 H(+). Catalyzes the methylthiolation of N6-(dimethylallyl)adenosine (i(6)A), leading to the formation of 2-methylthio-N6-(dimethylallyl)adenosine (ms(2)i(6)A) at position 37 in tRNAs that read codons beginning with uridine. The chain is tRNA-2-methylthio-N(6)-dimethylallyladenosine synthase from Agrobacterium fabrum (strain C58 / ATCC 33970) (Agrobacterium tumefaciens (strain C58)).